Reading from the N-terminus, the 453-residue chain is Phosphoglucosamine mutase (453 aa).

The active-site Phosphoserine intermediate is the Ser109. Mg(2+) contacts are provided by Ser109, Asp246, Asp248, and Asp250. Position 109 is a phosphoserine (Ser109).

Belongs to the phosphohexose mutase family. The cofactor is Mg(2+). Activated by phosphorylation.

It carries out the reaction alpha-D-glucosamine 1-phosphate = D-glucosamine 6-phosphate. In terms of biological role, catalyzes the conversion of glucosamine-6-phosphate to glucosamine-1-phosphate. This chain is Phosphoglucosamine mutase, found in Leifsonia xyli subsp. xyli (strain CTCB07).